Reading from the N-terminus, the 181-residue chain is Oligoribonuclease (181 aa).

In terms of domain architecture, Exonuclease spans 8–171 (LIWLDLEMTG…DDIKDSIMEL (164 aa)). The active site involves Y129.

Belongs to the oligoribonuclease family.

It is found in the cytoplasm. In terms of biological role, 3'-to-5' exoribonuclease specific for small oligoribonucleotides. This is Oligoribonuclease from Pseudoalteromonas translucida (strain TAC 125).